Consider the following 169-residue polypeptide: Short form salivary protein D7R3 (169 aa).

An N-terminal signal peptide occupies residues 1–21 (MFGKLLPCAILVWCLFSLGQA). Cystine bridges form between Cys-30–Cys-62, Cys-43–Cys-168, and Cys-101–Cys-120. Noradrenaline is bound by residues Glu-31 and Arg-46. Residue Glu-31 participates in serotonin binding. Serotonin is bound by residues His-59, Tyr-118, Asp-135, and Glu-138. Positions 118, 135, and 138 each coordinate histamine. 2 residues coordinate noradrenaline: Asp-135 and Glu-138.

The protein belongs to the PBP/GOBP family. As to expression, female saliva (at protein level). Female salivary gland. Low-level expression in female carcass without salivary glands. Not detected in male tissues.

The protein localises to the secreted. Modulates blood feeding of female mosquitoes on vertebrate species by binding and sequestering different mediators involved in the host response. Binds serotonin, noradrenaline, histamine and adrenaline. Inhibits histamine-, serotonin- and noradrenaline-induced smooth muscle contraction. Exhibits vasodilating activity. This chain is Short form salivary protein D7R3, found in Anopheles gambiae (African malaria mosquito).